The sequence spans 206 residues: High frequency lysogenization protein HflD homolog (206 aa).

It belongs to the HflD family.

It localises to the cytoplasm. The protein localises to the cell inner membrane. The polypeptide is High frequency lysogenization protein HflD homolog (Ectopseudomonas mendocina (strain ymp) (Pseudomonas mendocina)).